Consider the following 87-residue polypeptide: Type 3 secretion system needle filament protein (87 aa).

This sequence belongs to the SctF family. In terms of assembly, the core secretion machinery of the T3SS is composed of approximately 20 different proteins, including cytoplasmic components, a base, an export apparatus and a needle. This subunit polymerizes and forms the helical needle filament. In Y.enterocolitica E40, the needles are composed of 139 (plus-minus 19) YscF/SctF subunits.

It is found in the secreted. The protein localises to the cell surface. The secretion and/or polymerization may be controlled by the type III secretion system regulator YopR. In terms of biological role, component of the type III secretion system (T3SS), also called injectisome, which is used to inject bacterial effector proteins into eukaryotic host cells. YscF/SctF forms the external needle filament that protrudes from the bacterial surface. The needle is not sufficient by itself for the formation of a pore allowing translocation of the Yop effectors across the host cell membrane. This chain is Type 3 secretion system needle filament protein, found in Yersinia enterocolitica.